The sequence spans 378 residues: Succinyl-diaminopimelate desuccinylase (378 aa).

Histidine 66 provides a ligand contact to Zn(2+). Residue aspartate 68 is part of the active site. Aspartate 99 is a Zn(2+) binding site. The Proton acceptor role is filled by glutamate 133. Positions 134, 162, and 348 each coordinate Zn(2+).

It belongs to the peptidase M20A family. DapE subfamily. As to quaternary structure, homodimer. Requires Zn(2+) as cofactor. Co(2+) is required as a cofactor.

The catalysed reaction is N-succinyl-(2S,6S)-2,6-diaminopimelate + H2O = (2S,6S)-2,6-diaminopimelate + succinate. The protein operates within amino-acid biosynthesis; L-lysine biosynthesis via DAP pathway; LL-2,6-diaminopimelate from (S)-tetrahydrodipicolinate (succinylase route): step 3/3. Its function is as follows. Catalyzes the hydrolysis of N-succinyl-L,L-diaminopimelic acid (SDAP), forming succinate and LL-2,6-diaminopimelate (DAP), an intermediate involved in the bacterial biosynthesis of lysine and meso-diaminopimelic acid, an essential component of bacterial cell walls. This Halorhodospira halophila (strain DSM 244 / SL1) (Ectothiorhodospira halophila (strain DSM 244 / SL1)) protein is Succinyl-diaminopimelate desuccinylase.